We begin with the raw amino-acid sequence, 321 residues long: Fibronectin type III domain-containing protein 8 (321 aa).

The 103-residue stretch at 175 to 277 (VPEVPFICEH…KPYKFATVST (103 aa)) folds into the Fibronectin type-III domain.

The protein is Fibronectin type III domain-containing protein 8 (Fndc8) of Mus musculus (Mouse).